The sequence spans 149 residues: Protein FAM72A (149 aa).

This sequence belongs to the FAM72 family. Interacts with UNG. As to expression, may be up-regulated in malignant colon cancers, compared to normal colon and colon adenomas. Expression is also elevated in other common cancer types, including breast, lung, uterus, and ovary.

It is found in the cytoplasm. It localises to the mitochondrion. Functionally, may play a role in the regulation of cellular reactive oxygen species metabolism. May participate in cell growth regulation. The chain is Protein FAM72A (FAM72A) from Homo sapiens (Human).